The primary structure comprises 442 residues: Cell division protein FtsA (442 aa).

Belongs to the FtsA/MreB family. In terms of assembly, self-interacts. Interacts with FtsZ.

It is found in the cell inner membrane. Its function is as follows. Cell division protein that is involved in the assembly of the Z ring. May serve as a membrane anchor for the Z ring. The chain is Cell division protein FtsA from Rhizobium meliloti (strain 1021) (Ensifer meliloti).